The chain runs to 427 residues: L-cysteine:1D-myo-inositol 2-amino-2-deoxy-alpha-D-glucopyranoside ligase (427 aa).

Residue C46 participates in Zn(2+) binding. Residues 46-49 (CGIT), T61, and 84-86 (NVT) contribute to the L-cysteinyl-5'-AMP site. The short motif at 48 to 58 (ITPYDATHMGH) is the 'HIGH' region element. Residues 186–191 (ERGGDP) carry the 'ERGGDP' region motif. Residue W233 participates in L-cysteinyl-5'-AMP binding. C237 lines the Zn(2+) pocket. 255-257 (GSD) lines the L-cysteinyl-5'-AMP pocket. Position 262 (H262) interacts with Zn(2+). V289 contributes to the L-cysteinyl-5'-AMP binding site. The short motif at 295 to 299 (KMSKS) is the 'KMSKS' region element.

The protein belongs to the class-I aminoacyl-tRNA synthetase family. MshC subfamily. As to quaternary structure, monomer. It depends on Zn(2+) as a cofactor.

The enzyme catalyses 1D-myo-inositol 2-amino-2-deoxy-alpha-D-glucopyranoside + L-cysteine + ATP = 1D-myo-inositol 2-(L-cysteinylamino)-2-deoxy-alpha-D-glucopyranoside + AMP + diphosphate + H(+). Catalyzes the ATP-dependent condensation of GlcN-Ins and L-cysteine to form L-Cys-GlcN-Ins. The protein is L-cysteine:1D-myo-inositol 2-amino-2-deoxy-alpha-D-glucopyranoside ligase of Catenulispora acidiphila (strain DSM 44928 / JCM 14897 / NBRC 102108 / NRRL B-24433 / ID139908).